A 219-amino-acid polypeptide reads, in one-letter code: Elongation factor Ts (219 aa).

The segment at 82–85 is involved in Mg(2+) ion dislocation from EF-Tu; sequence TDFV.

Belongs to the EF-Ts family.

The protein resides in the cytoplasm. Associates with the EF-Tu.GDP complex and induces the exchange of GDP to GTP. It remains bound to the aminoacyl-tRNA.EF-Tu.GTP complex up to the GTP hydrolysis stage on the ribosome. This is Elongation factor Ts from Anaeromyxobacter dehalogenans (strain 2CP-1 / ATCC BAA-258).